Here is a 119-residue protein sequence, read N- to C-terminus: Protein TusC (119 aa).

It belongs to the DsrF/TusC family. Heterohexamer, formed by a dimer of trimers. The hexameric TusBCD complex contains 2 copies each of TusB, TusC and TusD. The TusBCD complex interacts with TusE.

It is found in the cytoplasm. Part of a sulfur-relay system required for 2-thiolation of 5-methylaminomethyl-2-thiouridine (mnm(5)s(2)U) at tRNA wobble positions. The protein is Protein TusC of Buchnera aphidicola subsp. Acyrthosiphon pisum (strain 5A).